The chain runs to 1089 residues: Probable transport protein MmpL8 (1089 aa).

The tract at residues 1–26 is disordered; the sequence is MCDVLMQPVRTPRPSTNLRSKPLRPT. A run of 12 helical transmembrane segments spans residues 44 to 64, 222 to 242, 257 to 277, 316 to 336, 349 to 369, 400 to 420, 555 to 575, 874 to 894, 898 to 918, 930 to 950, 973 to 993, and 996 to 1016; these read WVVIAFWVALAGLLAPTVPSL, ITILLLVILLIIYGNPITMVL, LVAIAGLAGLGIANQSIIFMS, IGKVIAASAATVAITFLGMVF, LGISVAVVFFAAVTLLPALMV, KTHLLASALVLVILAGCAGLA, AISTVGGLIDALAYLQDLLGG, IIAMTVCIVLLILIVLLRAIV, YLIGSVIVSYLAALGIGVIVF, IPGLTFVILVAVGADYNMLLI, GGVITAAGLIMAASMYGLVFA, and GSVVQGAFVLGTGLLLDTFLV. The segment at 1056 to 1078 is disordered; that stretch reads RTKRKPLLPKEEEEQSPPDDDDL. The span at 1066-1078 shows a compositional bias: acidic residues; it reads EEEEQSPPDDDDL.

Belongs to the resistance-nodulation-cell division (RND) (TC 2.A.6) family. MmpL subfamily.

The protein localises to the cell membrane. The polypeptide is Probable transport protein MmpL8 (mmpL8) (Mycobacterium tuberculosis (strain ATCC 25177 / H37Ra)).